Consider the following 397-residue polypeptide: Cathepsin E-B (397 aa).

Positions 1–16 (MRQILVLLLFVTLVYG) are cleaved as a signal peptide. Positions 17–49 (LIRVPLKRQKSIRKTPKEKGKLSHVWTQQGIDM) are cleaved as a propeptide — activation peptide. One can recognise a Peptidase A1 domain in the interval 74–385 (YFGEISIGTP…DRGNNRVGLA (312 aa)). An N-linked (GlcNAc...) asparagine glycan is attached at N86. Residue D92 is part of the active site. C105 and C110 are oxidised to a cystine. N-linked (GlcNAc...) asparagine glycosylation occurs at N130. A disulfide bridge links C268 with C272. The active site involves D277. C310 and C344 form a disulfide bridge.

The protein belongs to the peptidase A1 family. Homodimer; disulfide-linked. Glycosylated. Contains high mannose-type oligosaccharide. As to expression, expressed predominantly in the anterior and posterior adult stomach and at much lower levels in the larval foregut.

It is found in the endosome. The enzyme catalyses Similar to cathepsin D, but slightly broader specificity.. Its function is as follows. May have a role in immune function. Probably involved in the processing of antigenic peptides during MHC class II-mediated antigen presentation. The polypeptide is Cathepsin E-B (ctse-b) (Xenopus laevis (African clawed frog)).